The chain runs to 492 residues: PTS system N-acetylmuramic acid-specific EIIBC component (492 aa).

Residues 1–89 (MAKINQSVIA…NELLNSSTPT (89 aa)) form the PTS EIIB type-1 domain. The active-site Phosphocysteine intermediate; for EIIB activity is the Cys-28. The PTS EIIC type-1 domain occupies 123–487 (TKFATIFTPL…KKIEVLKADV (365 aa)). A run of 10 helical transmembrane segments spans residues 125-145 (FATIFTPLIPGFIAVGLLLGF), 167-187 (IIGYMKVFSKGMFSFLSILIG), 193-213 (AFGGSGINGAIIASLFVLSYN), 227-247 (FFGYSIDPRGNIIGVLIAAIL), 265-285 (MILTSAITLLIMGAIAFIFIM), 311-331 (ILAGLFLLAVMFGVHQGFVPV), 344-364 (LFPILAMAGGGQVGAALALYV), 378-398 (GAIIPGLLGIGEPLIYGVTLP), 403-423 (FITACLGGAAGGFFIGLIAYL), and 450-470 (IFVGMAVYAAGLVVAYISGFV).

The protein localises to the cell inner membrane. The catalysed reaction is N-acetyl-beta-D-muramate(out) + N(pros)-phospho-L-histidyl-[protein] = N-acetyl-beta-D-muramate 6-phosphate(in) + L-histidyl-[protein]. The phosphoenolpyruvate-dependent sugar phosphotransferase system (sugar PTS), a major carbohydrate active transport system, catalyzes the phosphorylation of incoming sugar substrates concomitantly with their translocation across the cell membrane. This system is involved in N-acetylmuramic acid (MurNAc) transport, yielding cytoplasmic MurNAc-6-P. Is also able to take up anhydro-N-acetylmuramic acid (anhMurNAc), but cannot phosphorylate the carbon 6, probably because of the 1,6-anhydro ring. This Photorhabdus laumondii subsp. laumondii (strain DSM 15139 / CIP 105565 / TT01) (Photorhabdus luminescens subsp. laumondii) protein is PTS system N-acetylmuramic acid-specific EIIBC component (murP).